The chain runs to 243 residues: UPF0246 protein SpyM51747 (243 aa).

Belongs to the UPF0246 family.

The protein is UPF0246 protein SpyM51747 of Streptococcus pyogenes serotype M5 (strain Manfredo).